The following is a 161-amino-acid chain: Transcription antitermination protein NusB (161 aa).

The segment at 1-22 (MNLSDFKPGEGTEVPEEEKSVS) is disordered.

This sequence belongs to the NusB family.

Functionally, involved in transcription antitermination. Required for transcription of ribosomal RNA (rRNA) genes. Binds specifically to the boxA antiterminator sequence of the ribosomal RNA (rrn) operons. This Hydrogenovibrio crunogenus (strain DSM 25203 / XCL-2) (Thiomicrospira crunogena) protein is Transcription antitermination protein NusB.